Consider the following 918-residue polypeptide: Importin subunit beta-2 (918 aa).

18 HEAT repeats span residues 11 to 38 (YVLQLATLLQNCMSPNPEIRNNAMEAME), 43 to 92 (QPEF…GGNN), 103 to 137 (YVKSNIIHGLYNSNNNLVSNVTGIVITTLFSTYYR), 145 to 181 (GLQMLYQLLELTSNGNEPSIKALSKIMEDSAQFFQLE), 190 to 222 (EALLDSFFRFISNPNFSPVIRSESVKCINTVIP), 235 to 263 (FLEIIFQLAQNDENDLVRAQICISFSFLL), 275 to 303 (DGIVQFMLHLITTVNEEKVAIEACEFLHA), 320 to 413 (KDIV…MTNI), 421 to 449 (IAFPFLREHLGSDRWFIREATILALGAMA), 461 to 488 (PALIPFLVEQLNDKWAPVRKMTCWTLSR), 501 to 534 (LIPVLEPIINTLMDKKKDVQEAAISSVAVFIENA), 542 to 577 (LFYSQLLTSFDKCLKYYKKKNLIILYDAIGRFAEKC), 583 to 620 (AMQIILPPLIEKWALLSDSDKELWPLLECLSCVASSLG), 628 to 678 (PEVY…GLGA), 694 to 725 (ILKIMLECLQDPVHEVRQSCFALLGDIVYFFN), 777 to 814 (IDMSRIILDLFTTNTQIVDSSVMENLSVTIGKMGLTHP), 825 to 858 (DSNWNKWCLSVNALDDVEEKSSAYMGFLKIINLT), and 867 to 900 (DTIHKIVTGLSSNVEANVFAQEIYTFLMNHSAQI). The segment at 361–395 (APRIVKKKEAGNGEDADDNEDDDDDDDDEDGDVDT) is disordered. The span at 372–393 (NGEDADDNEDDDDDDDDEDGDV) shows a compositional bias: acidic residues.

It belongs to the importin beta family. Importin beta-2 subfamily. As to quaternary structure, interacts with Ran (GSP1); interacts specifically with the GTP-bound form of Ran (GTP-Ran), protecting it from GTP hydrolysis and nucleotide exchange. Interacts with nucleoporins NUP1, NUP100 and NUP116. Interacts with NAB2 and HRP1/NAB4; via their rg-NLS. Interacts with TFG2; via its PY-NLS.

Its subcellular location is the cytoplasm. It localises to the nucleus. The protein localises to the nuclear pore complex. Functions in nuclear protein import as nuclear transport receptor. Serves as receptor for arginine/glycine-rich nuclear localization signals (rg-NLS) and PY-NLS in cargo substrates. Its predominant cargo substrate seems to be mRNA-binding proteins. Required for nuclear transport of NAB2, HRP1/NAB4 and TFG2. Mediates docking of the importin/substrate complex to the nuclear pore complex (NPC) through binding to repeat-containing nucleoporins. The complex is subsequently translocated through the pore by an energy requiring, Ran-dependent mechanism. At the nucleoplasmic side of the NPC, GTP-Ran binding leads to release of the cargo. Efficient GTP-Ran-mediated substrate release requires RNA. The importin is re-exported from the nucleus to the cytoplasm where GTP hydrolysis releases Ran from importin. The directionality of nuclear import is thought to be conferred by an asymmetric distribution of the GTP- and GDP-bound forms of Ran between the cytoplasm and nucleus. This chain is Importin subunit beta-2, found in Saccharomyces cerevisiae (strain ATCC 204508 / S288c) (Baker's yeast).